Reading from the N-terminus, the 256-residue chain is Pimeloyl-[acyl-carrier protein] methyl ester esterase (256 aa).

The AB hydrolase-1 domain occupies 15 to 242; sequence HLVLLHGWGL…AAHAPFISHP (228 aa). Residues Trp-22, 82–83, and 143–147 contribute to the substrate site; these read SL and FLALQ. The active-site Nucleophile is Ser-82. Residues Asp-207 and His-235 contribute to the active site. Residue His-235 coordinates substrate.

It belongs to the AB hydrolase superfamily. Carboxylesterase BioH family. In terms of assembly, monomer.

Its subcellular location is the cytoplasm. The enzyme catalyses 6-carboxyhexanoyl-[ACP] methyl ester + H2O = 6-carboxyhexanoyl-[ACP] + methanol + H(+). It participates in cofactor biosynthesis; biotin biosynthesis. Functionally, the physiological role of BioH is to remove the methyl group introduced by BioC when the pimeloyl moiety is complete. It allows to synthesize pimeloyl-ACP via the fatty acid synthetic pathway through the hydrolysis of the ester bonds of pimeloyl-ACP esters. The chain is Pimeloyl-[acyl-carrier protein] methyl ester esterase from Escherichia coli (strain K12 / MC4100 / BW2952).